We begin with the raw amino-acid sequence, 1669 residues long: Collagen alpha-1(IV) chain (1669 aa).

Residues 1 to 27 (MGPRLGVWLLLLLAALLLHEESSRAAA) form the signal peptide. A propeptide spans 28 to 172 (KGGCAGSGCG…LGHIPGTLLK (145 aa)) (N-terminal propeptide (7S domain)). Residues 50 to 1445 (ERGLPGLQGV…PPGTPSVDHG (1396 aa)) form a disordered region. A triple-helical region region spans residues 173–1440 (GERGYPGQPG…PGSMGPPGTP (1268 aa)). Residues 196–214 (VGPPGFTGPPGPPGPPGPP) are compositionally biased toward pro residues. Residues P204, P207, and P210 each carry the 3-hydroxyproline modification. Composition is skewed to basic and acidic residues over residues 254-263 (TAMRGEKGQK) and 289-298 (PGKDGEKGEK). Gly residues predominate over residues 347–356 (GYPGGPGAKG). A compositionally biased stretch (low complexity) spans 357–366 (ETGPKGFPGI). The segment covering 367 to 376 (PGQPGPPGFP) has biased composition (pro residues). Residues 396–412 (PGLPGVSLPGPSGRDGL) are compositionally biased toward low complexity. 2 stretches are compositionally biased toward pro residues: residues 413 to 424 (PGPPGPPGPPGQ) and 436 to 448 (PGPP…PGIP). The segment covering 485–494 (PGEIGFPGQP) has biased composition (low complexity). Composition is skewed to basic and acidic residues over residues 497 to 508 (KGDRGLPGRDGL) and 535 to 545 (FDIRLKGDKGD). The segment covering 586–595 (GPPGGVGFPG) has biased composition (gly residues). 2 positions are modified to 3-hydroxyproline: P587 and P602. P603 is modified (4-hydroxyproline). The residue at position 605 (P605) is a 3-hydroxyproline. 4-hydroxyproline is present on residues P606, P623, P626, P629, and P632. P647 bears the 3-hydroxyproline mark. Gly residues-rich tracts occupy residues 758 to 767 (GNVGGPGIPG) and 797 to 817 (GVPG…GPPG). Positions 847–871 (SQGLPGLTGQSGLPGLPGQQGTPGQ) are enriched in low complexity. Residues 937-955 (SMDKVDMGSMKGEKGDQGE) show a composition bias toward basic and acidic residues. Gly residues predominate over residues 1011-1020 (GSAGGMGLPG). 3 stretches are compositionally biased toward low complexity: residues 1030 to 1040 (IPGPQGIPGLP), 1101 to 1114 (SPGS…PGLP), and 1193 to 1212 (FPGL…QGFM). P1214 bears the 3-hydroxyproline mark. A compositionally biased stretch (pro residues) spans 1247–1258 (PGRPGPMGPPGL). The span at 1290–1299 (GMPGIGGSPG) shows a compositional bias: gly residues. Residues 1413-1428 (FGPPGPRGFPGPPGPD) show a composition bias toward pro residues. P1424 carries the 3-hydroxyproline modification. The 225-residue stretch at 1445–1669 (GFLVTRHSQT…SRCQVCMRRT (225 aa)) folds into the Collagen IV NC1 domain. 6 cysteine pairs are disulfide-bonded: C1460/C1551, C1493/C1548, C1505/C1511, C1570/C1665, C1604/C1662, and C1616/C1622. M1533 participates in a covalent cross-link: S-Lysyl-methionine sulfilimine (Met-Lys) (interchain with K-1651). Residue K1651 forms an S-Lysyl-methionine sulfilimine (Lys-Met) (interchain with M-1533) linkage.

Belongs to the type IV collagen family. In terms of assembly, there are six type IV collagen isoforms, alpha 1(IV)-alpha 6(IV), each of which can form a triple helix structure with 2 other chains to generate type IV collagen network. Interacts with EFEMP2. Post-translationally, lysines at the third position of the tripeptide repeating unit (G-X-Y) are hydroxylated in all cases. The modified lysines can be O-glycosylated. In terms of processing, contains 4-hydroxyproline. Prolines at the third position of the tripeptide repeating unit (G-X-Y) are hydroxylated in some or all of the chains. Contains 3-hydroxyproline. This modification occurs on the first proline residue in the sequence motif Gly-Pro-Hyp, where Hyp is 4-hydroxyproline. Post-translationally, type IV collagens contain numerous cysteine residues which are involved in inter- and intramolecular disulfide bonding. 12 of these, located in the NC1 domain, are conserved in all known type IV collagens. In terms of processing, the trimeric structure of the NC1 domains is stabilized by covalent bonds (sulfilimine cross-links) between Lys and Met residues. These cross-links are important for the mechanical stability of the basement membrane. Sulfilimine cross-link is catalyzed by PXDN. Proteolytic processing produces the C-terminal NC1 peptide, arresten.

It localises to the secreted. It is found in the extracellular space. The protein resides in the extracellular matrix. Its subcellular location is the basement membrane. Type IV collagen is the major structural component of glomerular basement membranes (GBM), forming a 'chicken-wire' meshwork together with laminins, proteoglycans and entactin/nidogen. Functionally, arresten, comprising the C-terminal NC1 domain, inhibits angiogenesis and tumor formation. The C-terminal half is found to possess the anti-angiogenic activity. Specifically inhibits endothelial cell proliferation, migration and tube formation. This is Collagen alpha-1(IV) chain from Bos taurus (Bovine).